We begin with the raw amino-acid sequence, 310 residues long: HPr kinase/phosphorylase (310 aa).

Residues H138 and K159 contribute to the active site. An ATP-binding site is contributed by 153–160 (GDSGIGKS). S160 provides a ligand contact to Mg(2+). The active-site Proton acceptor; for phosphorylation activity. Proton donor; for dephosphorylation activity is the D177. The tract at residues 201–210 (LEIRGVGIID) is important for the catalytic mechanism of both phosphorylation and dephosphorylation. E202 serves as a coordination point for Mg(2+). The active site involves R243. The tract at residues 264 to 269 (PVKTGR) is important for the catalytic mechanism of dephosphorylation.

The protein belongs to the HPrK/P family. Homohexamer. It depends on Mg(2+) as a cofactor.

The catalysed reaction is [HPr protein]-L-serine + ATP = [HPr protein]-O-phospho-L-serine + ADP + H(+). The enzyme catalyses [HPr protein]-O-phospho-L-serine + phosphate + H(+) = [HPr protein]-L-serine + diphosphate. Functionally, catalyzes the ATP- as well as the pyrophosphate-dependent phosphorylation of a specific serine residue in HPr, a phosphocarrier protein of the phosphoenolpyruvate-dependent sugar phosphotransferase system (PTS). HprK/P also catalyzes the pyrophosphate-producing, inorganic phosphate-dependent dephosphorylation (phosphorolysis) of seryl-phosphorylated HPr (P-Ser-HPr). The two antagonistic activities of HprK/P are regulated by several intracellular metabolites, which change their concentration in response to the absence or presence of rapidly metabolisable carbon sources (glucose, fructose, etc.) in the growth medium. Therefore, by controlling the phosphorylation state of HPr, HPrK/P is a sensor enzyme that plays a major role in the regulation of carbon metabolism and sugar transport: it mediates carbon catabolite repression (CCR), and regulates PTS-catalyzed carbohydrate uptake and inducer exclusion. The sequence is that of HPr kinase/phosphorylase from Streptococcus uberis (strain ATCC BAA-854 / 0140J).